The following is a 557-amino-acid chain: Hepatocyte nuclear factor 1-beta (557 aa).

Residues 1–31 form a dimerization region; sequence MVSKLTSLQQELLSALLSSGVTKEVLVQALE. One can recognise an HNF-p1 domain in the interval 1–32; the sequence is MVSKLTSLQQELLSALLSSGVTKEVLVQALEE. Ser49, Ser52, Ser75, and Ser80 each carry phosphoserine. The disordered stretch occupies residues 64–85; that stretch reads TLTNGHAKGRLSGDEGSEDGDD. A POU-specific atypical domain is found at 93–188; that stretch reads KELQALNTEE…ILRQFNQTVQ (96 aa). Residues 231 to 311 constitute a DNA-binding region (homeobox; HNF1-type); that stretch reads MRRNRFKWGP…NRRKEEAFRQ (81 aa). Positions 324–370 are disordered; the sequence is HSLNPLLSHGSPHHQPSSSPPNKLSGVRYSQQGNNEVTSSSTISHHG. A compositionally biased stretch (low complexity) spans 328–344; that stretch reads PLLSHGSPHHQPSSSPP. A compositionally biased stretch (polar residues) spans 351-370; sequence RYSQQGNNEVTSSSTISHHG.

It belongs to the HNF1 homeobox family. Binds DNA as a dimer. Can form homodimer or heterodimer with HNF1-alpha. Interacts (via HNF-p1 domain) with PCBD1; the interaction increases its transactivation activity.

It localises to the nucleus. Transcription factor that binds to the inverted palindrome 5'-GTTAATNATTAAC-3'. Binds to the FPC element in the cAMP regulatory unit of the PLAU gene. Transcriptional activity is increased by coactivator PCBD1. This is Hepatocyte nuclear factor 1-beta (HNF1B) from Pongo abelii (Sumatran orangutan).